Reading from the N-terminus, the 181-residue chain is Histone deacetylase complex subunit SAP30L-B (181 aa).

Disulfide bonds link Cys26-Cys27 and Cys35-Cys71. Residues 26–74 form an Atypical zinc finger; the sequence is CCLIDGGERCPRPAGNASFSKRVQKSISQKKLKLDIDKSVRHLYICDFH. Positions 82–103 are disordered; the sequence is RNKRKRKTSDDGGDSPEHETDV. The short motif at 83–88 is the Nuclear localization signal (NLS) element; the sequence is NKRKRK. The segment at 85–87 is important for DNA and phosphoinositide binding; the sequence is RKR.

This sequence belongs to the SAP30 family. As to quaternary structure, interacts with components of the histone deacetylase complex sin3a, hdac1 and hdac2. Binds histones and nucleosomes.

Its subcellular location is the nucleus. It localises to the nucleolus. Functions as a transcription repressor, probably via its interaction with histone deacetylase complexes. Involved in the functional recruitment of the class 1 Sin3-histone deacetylase complex (HDAC) to the nucleolus. Binds DNA, apparently without sequence-specificity, and bends bound double-stranded DNA. Binds phosphoinositol phosphates (phosphoinositol 3-phosphate, phosphoinositol 4-phosphate and phosphoinositol 5-phosphate) via the same basic sequence motif that mediates DNA binding and nuclear import. The chain is Histone deacetylase complex subunit SAP30L-B (sap30l-b) from Xenopus laevis (African clawed frog).